We begin with the raw amino-acid sequence, 210 residues long: Shikimate kinase (210 aa).

Residue glycine 34 to valine 39 participates in ATP binding. A Mg(2+)-binding site is contributed by serine 38. Substrate is bound by residues aspartate 56, arginine 80, and glycine 102. Arginine 140 lines the ATP pocket. Residue arginine 159 coordinates substrate.

The protein belongs to the shikimate kinase family. As to quaternary structure, monomer. Requires Mg(2+) as cofactor.

It localises to the cytoplasm. The enzyme catalyses shikimate + ATP = 3-phosphoshikimate + ADP + H(+). The protein operates within metabolic intermediate biosynthesis; chorismate biosynthesis; chorismate from D-erythrose 4-phosphate and phosphoenolpyruvate: step 5/7. In terms of biological role, catalyzes the specific phosphorylation of the 3-hydroxyl group of shikimic acid using ATP as a cosubstrate. The polypeptide is Shikimate kinase (Bartonella quintana (strain Toulouse) (Rochalimaea quintana)).